The sequence spans 303 residues: 1D-myo-inositol 2-acetamido-2-deoxy-alpha-D-glucopyranoside deacetylase (303 aa).

Zn(2+)-binding residues include His13, Asp16, and His147.

This sequence belongs to the MshB deacetylase family. Requires Zn(2+) as cofactor.

It catalyses the reaction 1D-myo-inositol 2-acetamido-2-deoxy-alpha-D-glucopyranoside + H2O = 1D-myo-inositol 2-amino-2-deoxy-alpha-D-glucopyranoside + acetate. Its function is as follows. Catalyzes the deacetylation of 1D-myo-inositol 2-acetamido-2-deoxy-alpha-D-glucopyranoside (GlcNAc-Ins) in the mycothiol biosynthesis pathway. In Mycobacterium tuberculosis (strain ATCC 25177 / H37Ra), this protein is 1D-myo-inositol 2-acetamido-2-deoxy-alpha-D-glucopyranoside deacetylase.